Here is a 159-residue protein sequence, read N- to C-terminus: Transcriptional repressor NrdR (159 aa).

The segment at 1–21 (MRCPKCQHNKSNVIDSRQAED) is disordered. A zinc finger lies at 3–34 (CPKCQHNKSNVIDSRQAEDGNTIRRRRECDAC). One can recognise an ATP-cone domain in the interval 49 to 139 (LLVVKKDGTR…VYRSFKDVDE (91 aa)).

Belongs to the NrdR family. Requires Zn(2+) as cofactor.

Negatively regulates transcription of bacterial ribonucleotide reductase nrd genes and operons by binding to NrdR-boxes. This Streptococcus thermophilus (strain ATCC BAA-491 / LMD-9) protein is Transcriptional repressor NrdR.